The chain runs to 147 residues: Globin, polymeric component P2 (147 aa).

The Globin domain maps to 2 to 146 (PLTADQVAAL…ISDALVAGLE (145 aa)). A heme b-binding site is contributed by His96.

This sequence belongs to the globin family. Polymer.

The chain is Globin, polymeric component P2 from Glycera dibranchiata (Bloodworm).